The chain runs to 354 residues: DNA polymerase IV (354 aa).

One can recognise a UmuC domain in the interval 14-198 (IIHIDMDAFF…MDIAKFHGVG (185 aa)). Residues D18 and D116 each contribute to the Mg(2+) site. E117 is a catalytic residue.

Belongs to the DNA polymerase type-Y family. In terms of assembly, monomer. The cofactor is Mg(2+).

The protein resides in the cytoplasm. The catalysed reaction is DNA(n) + a 2'-deoxyribonucleoside 5'-triphosphate = DNA(n+1) + diphosphate. Its function is as follows. Poorly processive, error-prone DNA polymerase involved in untargeted mutagenesis. Copies undamaged DNA at stalled replication forks, which arise in vivo from mismatched or misaligned primer ends. These misaligned primers can be extended by PolIV. Exhibits no 3'-5' exonuclease (proofreading) activity. May be involved in translesional synthesis, in conjunction with the beta clamp from PolIII. The sequence is that of DNA polymerase IV from Streptococcus gordonii (strain Challis / ATCC 35105 / BCRC 15272 / CH1 / DL1 / V288).